A 421-amino-acid polypeptide reads, in one-letter code: Protein MID1-COMPLEMENTING ACTIVITY 1 (421 aa).

Residues 188-218 (RFCEALKTENEKLQIELQRSQEHYDVAQCEV) adopt a coiled-coil conformation. Positions 233–288 (EPDSEKELTKKASKKSERSSSMKTEYSYDEDSPKKSSTRAASRSTSNVSSGHDLLS) are disordered. Basic and acidic residues predominate over residues 235-252 (DSEKELTKKASKKSERSS). The span at 270–282 (TRAASRSTSNVSS) shows a compositional bias: low complexity. The helical transmembrane segment at 346–362 (LMAYSLILSCCCYTCCV) threads the bilayer.

As to expression, expressed in roots, leaves, stems, flowers and siliques. Expressed in vascular tissues of cotyledons, leaves and primary root, in the promeristem and adjacent elongation zone of the primary root and in the shoot apical meristem. Detected in the stele and endodermis, but not in the cortex, epidermis or root cap, including the columella. Not expressed in root hairs or in mesophyll cells of leaves and cotyledons.

Its subcellular location is the cell membrane. With respect to regulation, inhibited by GdCl(3), but not by verapamil. Calcium-permeable stretch-activated channel component. Involved in mechano-stimulated calcium uptake mechanism and in mechanosensing in the primary root. The sequence is that of Protein MID1-COMPLEMENTING ACTIVITY 1 (MCA1) from Arabidopsis thaliana (Mouse-ear cress).